The following is a 504-amino-acid chain: Anaerobic nitric oxide reductase transcription regulator NorR (504 aa).

D57 is subject to 4-aspartylphosphate. The Sigma-54 factor interaction domain maps to 187-416 (MIGLSPGMTQ…LEHAIHRAVV (230 aa)). Residues 215–222 (GETGTGKE) and 278–287 (ADNGTLFLDE) contribute to the ATP site. A DNA-binding region (H-T-H motif) is located at residues 479–498 (WAACARMLETDVANLHRLAK).

Its pathway is nitrogen metabolism; nitric oxide reduction. Functionally, required for the expression of anaerobic nitric oxide (NO) reductase, acts as a transcriptional activator for at least the norVW operon. Activation also requires sigma-54. The chain is Anaerobic nitric oxide reductase transcription regulator NorR from Escherichia coli (strain K12 / MC4100 / BW2952).